The primary structure comprises 86 residues: MSESSDISAMQPVNPKPFLKGLVNHRVGVKLKFNSTEYRGTLVSTDNYFNLQLNEAEEFVAGVSHGTLGEIFIRCNNVLYIRELPN.

The 73-residue stretch at 14 to 86 (NPKPFLKGLV…NVLYIRELPN (73 aa)) folds into the Sm domain.

Belongs to the snRNP Sm proteins family. SmF/LSm6 subfamily. In terms of assembly, component of the Sm core complex, present in spliceosomal snRNP U1, U2, U4/U6 and U5. The core complex contains SMB1, SMD1, SMD2, SMD3, SME1, SMX3 and SMX2 (Sm proteins B, D1, D2, D3, E, F and G, respectively), and is probably a heptameric ring structure. SMX3 specifically interacts with SME1. Belongs to the CWC complex (or CEF1-associated complex), a spliceosome sub-complex reminiscent of a late-stage spliceosome composed of the U2, U5 and U6 snRNAs and at least BUD13, BUD31, BRR2, CDC40, CEF1, CLF1, CUS1, CWC2, CWC15, CWC21, CWC22, CWC23, CWC24, CWC25, CWC27, ECM2, HSH155, IST3, ISY1, LEA1, MSL1, NTC20, PRP8, PRP9, PRP11, PRP19, PRP21, PRP22, PRP45, PRP46, SLU7, SMB1, SMD1, SMD2, SMD3, SMX2, SMX3, SNT309, SNU114, SPP2, SYF1, SYF2, RSE1 and YJU2. Component of the U4/U6-U5 tri-snRNP complex composed of the U4, U6 and U5 snRNAs and at least PRP3, PRP4, PRP6, PRP8, PRP18, PRP31, PRP38, SNU13, SNU23, SNU66, SNU114, SPP381, SMB1, SMD1, SMD2, SMD3, SMX2, SMX3, LSM2, LSM3, LSM4, LSM5, LSM6, LSM7, LSM8, BRR2 and DIB1.

The protein resides in the nucleus. Its subcellular location is the cytoplasm. Its function is as follows. Plays a role in pre-mRNA splicing as a core component of the spliceosomal U1, U2, U4 and U5 small nuclear ribonucleoproteins (snRNPs), the building blocks of the spliceosome. This chain is Small nuclear ribonucleoprotein F (SMX3), found in Saccharomyces cerevisiae (strain ATCC 204508 / S288c) (Baker's yeast).